A 621-amino-acid polypeptide reads, in one-letter code: Acetolactate synthase (621 aa).

Positions 1–19 (MSAPTRRPAPDAPGAAGIA) are enriched in low complexity. Positions 1-39 (MSAPTRRPAPDAPGAAGIAPAPPAPAAKPAAGKPKRIGP) are disordered. Glu89 provides a ligand contact to thiamine diphosphate. FAD is bound by residues Arg190, 296–317 (HGTV…LGTR), and 339–358 (DIDP…IVGD). Residues 432–512 (HDQMWAAQFI…IKVALINNGN (81 aa)) form a thiamine pyrophosphate binding region. The Mg(2+) site is built by Asp483 and Asn510.

It belongs to the TPP enzyme family. Mg(2+) serves as cofactor. Thiamine diphosphate is required as a cofactor.

The enzyme catalyses 2 pyruvate + H(+) = (2S)-2-acetolactate + CO2. It participates in amino-acid biosynthesis; L-isoleucine biosynthesis; L-isoleucine from 2-oxobutanoate: step 1/4. Its pathway is amino-acid biosynthesis; L-valine biosynthesis; L-valine from pyruvate: step 1/4. The protein is Acetolactate synthase (ilvB) of Mycobacterium avium.